The sequence spans 357 residues: RNA-binding protein 43 (357 aa).

The 90-residue stretch at 15 to 104 folds into the RRM domain; the sequence is RTVVVAGLPV…VSLRVSHFGD (90 aa).

This Homo sapiens (Human) protein is RNA-binding protein 43 (RBM43).